Here is a 163-residue protein sequence, read N- to C-terminus: MADSSFDVVSKVDRQEVDNALNQAAKELSTRFDFRGTDTTIAWKGEEAIEIVSSTEERVKAAVDVFKEKLVRRDISMKAFDAGDPQASGKTYKVSGTLKQGISSEDAKKITKLIRDEGPKGVKAQIQGDEIRVSSKKRDDLQAVIALLKGADLDVALQFVNYR.

This sequence belongs to the YajQ family.

Its function is as follows. Nucleotide-binding protein. The sequence is that of Nucleotide-binding protein Mvan_0997 from Mycolicibacterium vanbaalenii (strain DSM 7251 / JCM 13017 / BCRC 16820 / KCTC 9966 / NRRL B-24157 / PYR-1) (Mycobacterium vanbaalenii).